The sequence spans 451 residues: Tubulin alpha-1 chain (451 aa).

Position 11 (Q11) interacts with GTP. N6-acetyllysine is present on K40. GTP is bound by residues E71, G144, T145, T179, N206, and N228. Position 71 (E71) interacts with Mg(2+). Residue E254 is part of the active site.

It belongs to the tubulin family. In terms of assembly, dimer of alpha and beta chains. A typical microtubule is a hollow water-filled tube with an outer diameter of 25 nm and an inner diameter of 15 nM. Alpha-beta heterodimers associate head-to-tail to form protofilaments running lengthwise along the microtubule wall with the beta-tubulin subunit facing the microtubule plus end conferring a structural polarity. Microtubules usually have 13 protofilaments but different protofilament numbers can be found in some organisms and specialized cells. Mg(2+) serves as cofactor. Undergoes a tyrosination/detyrosination cycle, the cyclic removal and re-addition of a C-terminal tyrosine residue by the enzymes tubulin tyrosine carboxypeptidase (TTCP) and tubulin tyrosine ligase (TTL), respectively. In terms of processing, acetylation of alpha chains at Lys-40 stabilizes microtubules and affects affinity and processivity of microtubule motors. This modification has a role in multiple cellular functions, ranging from cell motility, cell cycle progression or cell differentiation to intracellular trafficking and signaling.

Its subcellular location is the cytoplasm. It is found in the cytoskeleton. It carries out the reaction GTP + H2O = GDP + phosphate + H(+). Its function is as follows. Tubulin is the major constituent of microtubules, a cylinder consisting of laterally associated linear protofilaments composed of alpha- and beta-tubulin heterodimers. Microtubules grow by the addition of GTP-tubulin dimers to the microtubule end, where a stabilizing cap forms. Below the cap, tubulin dimers are in GDP-bound state, owing to GTPase activity of alpha-tubulin. This Zea mays (Maize) protein is Tubulin alpha-1 chain (TUBA1).